The primary structure comprises 473 residues: Glutamate--tRNA ligase 2 (473 aa).

The short motif at 11-21 (PSPTGYLHIGG) is the 'HIGH' region element. Residues 113–133 (KARAEGRPPRYDGRWRDRDPS) are compositionally biased toward basic and acidic residues. Residues 113–136 (KARAEGRPPRYDGRWRDRDPSEAP) form a disordered region. Residues 240 to 244 (KLSKR) carry the 'KMSKS' region motif. Residue K243 coordinates ATP.

It belongs to the class-I aminoacyl-tRNA synthetase family. Glutamate--tRNA ligase type 1 subfamily. In terms of assembly, monomer.

It localises to the cytoplasm. It catalyses the reaction tRNA(Glu) + L-glutamate + ATP = L-glutamyl-tRNA(Glu) + AMP + diphosphate. Its function is as follows. Catalyzes the attachment of glutamate to tRNA(Glu) in a two-step reaction: glutamate is first activated by ATP to form Glu-AMP and then transferred to the acceptor end of tRNA(Glu). This is Glutamate--tRNA ligase 2 from Brucella canis (strain ATCC 23365 / NCTC 10854 / RM-666).